The sequence spans 883 residues: Phosphoenolpyruvate carboxylase (883 aa).

Active-site residues include histidine 138 and lysine 546.

The protein belongs to the PEPCase type 1 family. The cofactor is Mg(2+).

The catalysed reaction is oxaloacetate + phosphate = phosphoenolpyruvate + hydrogencarbonate. Its function is as follows. Forms oxaloacetate, a four-carbon dicarboxylic acid source for the tricarboxylic acid cycle. In Escherichia coli O127:H6 (strain E2348/69 / EPEC), this protein is Phosphoenolpyruvate carboxylase.